We begin with the raw amino-acid sequence, 87 residues long: Small ribosomal subunit protein uS15 (87 aa).

Belongs to the universal ribosomal protein uS15 family. Part of the 30S ribosomal subunit. Forms a bridge to the 50S subunit in the 70S ribosome, contacting the 23S rRNA.

One of the primary rRNA binding proteins, it binds directly to 16S rRNA where it helps nucleate assembly of the platform of the 30S subunit by binding and bridging several RNA helices of the 16S rRNA. Its function is as follows. Forms an intersubunit bridge (bridge B4) with the 23S rRNA of the 50S subunit in the ribosome. This is Small ribosomal subunit protein uS15 from Alkaliphilus metalliredigens (strain QYMF).